Here is a 411-residue protein sequence, read N- to C-terminus: Ubiquitin-binding protein CUE5 (411 aa).

Positions 1 to 12 are enriched in basic and acidic residues; the sequence is MEEKEGIKDSSL. 2 disordered regions span residues 1-102 and 142-411; these read MEEK…NPIL and ESGK…DDEM. Lys15 participates in a covalent cross-link: Glycyl lysine isopeptide (Lys-Gly) (interchain with G-Cter in ubiquitin). Ser21 and Ser36 each carry phosphoserine. Residues 25-58 show a composition bias toward basic and acidic residues; that stretch reads DISKTTDVDLNSDGKKDNDTSAKDGTPKVEEKVN. Residue Lys59 forms a Glycyl lysine isopeptide (Lys-Gly) (interchain with G-Cter in ubiquitin) linkage. Thr70 is subject to Phosphothreonine. Lys76 participates in a covalent cross-link: Glycyl lysine isopeptide (Lys-Gly) (interchain with G-Cter in ubiquitin). Ser91 bears the Phosphoserine mark. The CUE domain maps to 97–140; that stretch reads KENPILQELKDAFPNLEEKYIKAVIIASQGVLSPAFNALLFLSD. Lys156 participates in a covalent cross-link: Glycyl lysine isopeptide (Lys-Gly) (interchain with G-Cter in ubiquitin). Thr167 is subject to Phosphothreonine. Over residues 209–219 the composition is skewed to basic and acidic residues; it reads NPNEREQHHED. Residue Ser220 is modified to Phosphoserine. The segment covering 230–242 has biased composition (basic and acidic residues); it reads VEKDLPELTDRAG. Positions 245 to 256 are enriched in polar residues; the sequence is LQDTANKVSNWI. Ser309 and Ser318 each carry phosphoserine. Thr346 bears the Phosphothreonine mark. Ser348 is subject to Phosphoserine. Thr352 bears the Phosphothreonine mark. A Glycyl lysine isopeptide (Lys-Gly) (interchain with G-Cter in ubiquitin) cross-link involves residue Lys354. Residues Thr364 and Thr367 each carry the phosphothreonine modification. An AIM motif is present at residues 373-376; sequence WQPL. Residue Lys396 forms a Glycyl lysine isopeptide (Lys-Gly) (interchain with G-Cter in ubiquitin) linkage. Over residues 399–411 the composition is skewed to acidic residues; sequence DEDEFLINSDDEM. Ser407 carries the phosphoserine modification.

In terms of assembly, interacts with ATG8 (via AIM motif), CLB2, and ubiquitin (via CUE domain).

It is found in the cytoplasm. Its function is as follows. Connects the ubiquitin pathway to autophagy by functioning as a ubiquitin-ATG8 adapter and thus mediating autophagic clearance of ubiquitin conjugates under starvation conditions. The CUE5-dependent selective autophagy pathway plays an important role in clearance of cytotoxic protein aggregates. Not required for cytoplasmic to vacuole pathway (cvt), mitophagy, pexophagy, or ribophagy. The sequence is that of Ubiquitin-binding protein CUE5 from Saccharomyces cerevisiae (strain ATCC 204508 / S288c) (Baker's yeast).